An 85-amino-acid polypeptide reads, in one-letter code: UPF0297 protein CPR_1749 (85 aa).

The protein belongs to the UPF0297 family.

The chain is UPF0297 protein CPR_1749 from Clostridium perfringens (strain SM101 / Type A).